Reading from the N-terminus, the 195-residue chain is Protein GrpE (195 aa).

It belongs to the GrpE family. As to quaternary structure, homodimer.

The protein resides in the cytoplasm. Participates actively in the response to hyperosmotic and heat shock by preventing the aggregation of stress-denatured proteins, in association with DnaK and GrpE. It is the nucleotide exchange factor for DnaK and may function as a thermosensor. Unfolded proteins bind initially to DnaJ; upon interaction with the DnaJ-bound protein, DnaK hydrolyzes its bound ATP, resulting in the formation of a stable complex. GrpE releases ADP from DnaK; ATP binding to DnaK triggers the release of the substrate protein, thus completing the reaction cycle. Several rounds of ATP-dependent interactions between DnaJ, DnaK and GrpE are required for fully efficient folding. The chain is Protein GrpE from Francisella tularensis subsp. tularensis (strain FSC 198).